A 331-amino-acid chain; its full sequence is MAGKSDLPVIARDDNLSEETKTLISSLPTYQDSHVKLCKYQGCWYYHNTLQAVINYQRNFQPQDTDIILASFPKSGTTWLKALSVAIVERSKQPFDDDPLTHPLLSDNPHGIVPFFEFDMYLKTSTPDLTKFSTSSPRLFSTHMPLHTFKEGLKGSPCKVVYMCRNIKDVLISDWHFRSKYSNNEVSRSTLESMFESFCGGVSFYGPFWDHALSYWRGSLENPKHVLFMRYEEMKTEPCVQVKRLAEFLGFPFTKEEEDSGSISKLLELCSLGNLSGLEVNKTGKTWMNYDYKSYFRKGEVGDWKNHLTPEMENKIDMIIEEKLKGSDLKF.

Position 74–79 (74–79) interacts with 3'-phosphoadenylyl sulfate; that stretch reads KSGTTW. The active-site Proton acceptor is His143. 3'-phosphoadenylyl sulfate is bound by residues Arg165, Ser173, Tyr231, and 297 to 299; that span reads RKG.

The protein belongs to the sulfotransferase 1 family.

It is found in the cytoplasm. Functionally, sulfotransferase that utilizes 3'-phospho-5'-adenylyl sulfate (PAPS) as sulfonate donor. The chain is Cytosolic sulfotransferase 1 (SOT1) from Arabidopsis thaliana (Mouse-ear cress).